We begin with the raw amino-acid sequence, 47 residues long: Photosystem II reaction center protein K (47 aa).

Residues 1–10 (MAPLTLDLLA) constitute a propeptide that is removed on maturation. The helical transmembrane segment at 26 to 46 (LPLIPLLFFLLVFVWQAAVGF) threads the bilayer.

This sequence belongs to the PsbK family. PSII is composed of 1 copy each of membrane proteins PsbA, PsbB, PsbC, PsbD, PsbE, PsbF, PsbH, PsbI, PsbJ, PsbK, PsbL, PsbM, PsbT, PsbX, PsbY, Psb30/Ycf12, peripheral proteins PsbO, CyanoQ (PsbQ), PsbU, PsbV and a large number of cofactors. It forms dimeric complexes.

Its subcellular location is the cellular thylakoid membrane. In terms of biological role, one of the components of the core complex of photosystem II (PSII). PSII is a light-driven water:plastoquinone oxidoreductase that uses light energy to abstract electrons from H(2)O, generating O(2) and a proton gradient subsequently used for ATP formation. It consists of a core antenna complex that captures photons, and an electron transfer chain that converts photonic excitation into a charge separation. In Prochlorococcus marinus (strain SARG / CCMP1375 / SS120), this protein is Photosystem II reaction center protein K.